The chain runs to 1096 residues: Protein spire (1096 aa).

Disordered stretches follow at residues 1-79 (MTEH…GNGT) and 184-211 (VESQEQEASQQEQQQKQPQMDDSATSSV). The span at 37-51 (LSTSPDSANGDAQQA) shows a compositional bias: polar residues. Basic residues predominate over residues 53 to 65 (THTHIISHTHSKG). 2 stretches are compositionally biased toward low complexity: residues 66–77 (AAKTQTQTQNGN) and 189–201 (QEASQQEQQQKQP). Positions 111–366 (VTLNNILDSF…RALATETIEL (256 aa)) constitute a KIND domain. The stretch at 315–340 (KRWDDEAEEERNDTKELEHIIETCRN) forms a coiled coil. WH2 domains lie at 436-454 (PYEILMGDIRAKKYQLRKV) and 500-517 (PREQLMESIRQGKELKQI). Disordered regions lie at residues 560–588 (DDSSMSSSHSTAATHQHHQQHQPHHAHLA), 614–656 (QECQ…PSFT), and 693–762 (QSNL…LGPW). Over residues 574 to 585 (HQHHQQHQPHHA) the composition is skewed to basic residues. 2 stretches are compositionally biased toward low complexity: residues 633–645 (APRQTLPQPQAQA) and 714–725 (DAGSQSQSGASS). Residues 737-754 (EGDHSQTTDGPPRLDEAH) are compositionally biased toward basic and acidic residues. The segment at 780 to 800 (LSVTLAEIVHIRSVMTKAELE) is spir-box. Over residues 874 to 894 (PASSSTPSPSHHAHQAHSSST) the composition is skewed to low complexity. Disordered regions lie at residues 874-899 (PASSSTPSPSHHAHQAHSSSTGNIMD), 912-958 (RSES…APGH), and 997-1021 (RSMEGPRSLPVHSPAYRPLSNSSTL). Polar residues predominate over residues 921–941 (STVGSAPSSPKHQRSNMSTPG).

It belongs to the spire family. In terms of assembly, interacts with bsk, Rho1, Rac1, Cdc42 and wash. Interacts with capu. In terms of processing, phosphorylated by Jnk kinase (bsk).

It is found in the cytoplasm. The protein localises to the cytoskeleton. It localises to the perinuclear region. Its subcellular location is the cell membrane. The protein resides in the cytoplasmic vesicle membrane. Acts as an actin nucleation factor, remains associated with the slow-growing pointed end of the new filament. Promotes dissociation of capu from the barbed end of actin filaments. Involved in intracellular vesicle transport along actin fibers, providing a novel link between actin cytoskeleton dynamics and intracellular transport. Required for localization of determinants within the developing oocyte to the posterior pole and to the dorsal anterior corner. Links Rho family signaling and Jnk function to the actin cytoskeleton. The chain is Protein spire from Drosophila pseudoobscura pseudoobscura (Fruit fly).